We begin with the raw amino-acid sequence, 542 residues long: Chondroitin sulfate N-acetylgalactosaminyltransferase 2 (542 aa).

At 1-13 (MSRRGSILHSRTQ) the chain is on the cytoplasmic side. A helical; Signal-anchor for type II membrane protein transmembrane segment spans residues 14–34 (WLLLGLALLFSLVLFMYLLEC). Residues 35 to 542 (APQTDGNASL…AYRTNSETAG (508 aa)) lie on the Lumenal side of the membrane. Asn-41 carries N-linked (GlcNAc...) asparagine glycosylation. Residues 59–105 (ALLQEQEEHYQTRATSLKRQIAQLKQELQDMSEKMRALQERKKLGAN) adopt a coiled-coil conformation. Asn-333 carries N-linked (GlcNAc...) asparagine glycosylation. Residues Asp-369 and His-486 each coordinate a divalent metal cation.

This sequence belongs to the chondroitin N-acetylgalactosaminyltransferase family.

It localises to the golgi apparatus. Its subcellular location is the golgi stack membrane. The enzyme catalyses 3-O-(beta-D-GlcA-(1-&gt;3)-beta-D-Gal-(1-&gt;3)-beta-D-Gal-(1-&gt;4)-beta-D-Xyl)-L-seryl-[protein] + UDP-N-acetyl-alpha-D-galactosamine = 3-O-(beta-D-GalNAc-(1-&gt;4)-beta-D-GlcA-(1-&gt;3)-beta-D-Gal-(1-&gt;3)-beta-D-Gal-(1-&gt;4)-beta-D-Xyl)-L-seryl-[protein] + UDP + H(+). In terms of biological role, transfers 1,4-N-acetylgalactosamine (GalNAc) from UDP-GalNAc to the non-reducing end of glucuronic acid (GlcUA). Required for addition of the first GalNAc to the core tetrasaccharide linker and for elongation of chondroitin chains. The polypeptide is Chondroitin sulfate N-acetylgalactosaminyltransferase 2 (Csgalnact2) (Mus musculus (Mouse)).